Reading from the N-terminus, the 150-residue chain is Arginine repressor (150 aa).

This sequence belongs to the ArgR family.

It localises to the cytoplasm. It participates in amino-acid biosynthesis; L-arginine biosynthesis [regulation]. Its function is as follows. Regulates arginine biosynthesis genes. The protein is Arginine repressor of Staphylococcus epidermidis (strain ATCC 35984 / DSM 28319 / BCRC 17069 / CCUG 31568 / BM 3577 / RP62A).